We begin with the raw amino-acid sequence, 209 residues long: Phosphoheptose isomerase (209 aa).

In terms of domain architecture, SIS spans 50 to 209 (IADTFREGGK…ELVEKMMGYD (160 aa)). Residue 65 to 67 (NGG) participates in substrate binding. Positions 74 and 78 each coordinate Zn(2+). Substrate is bound by residues Glu78, 109 to 110 (ND), 135 to 137 (STS), Ser140, and Gln188. Residues Gln188 and His196 each coordinate Zn(2+).

This sequence belongs to the SIS family. GmhA subfamily. Requires Zn(2+) as cofactor.

Its subcellular location is the cytoplasm. The enzyme catalyses 2 D-sedoheptulose 7-phosphate = D-glycero-alpha-D-manno-heptose 7-phosphate + D-glycero-beta-D-manno-heptose 7-phosphate. The protein operates within carbohydrate biosynthesis; D-glycero-D-manno-heptose 7-phosphate biosynthesis; D-glycero-alpha-D-manno-heptose 7-phosphate and D-glycero-beta-D-manno-heptose 7-phosphate from sedoheptulose 7-phosphate: step 1/1. Its function is as follows. Catalyzes the isomerization of sedoheptulose 7-phosphate in D-glycero-D-manno-heptose 7-phosphate. In Chlorobaculum tepidum (strain ATCC 49652 / DSM 12025 / NBRC 103806 / TLS) (Chlorobium tepidum), this protein is Phosphoheptose isomerase.